Reading from the N-terminus, the 72-residue chain is Conotoxin VnMKLT2-011 (72 aa).

Residues 1–23 (MMKLTCVLIIAVLFLTACQLTTA) form the signal peptide. Residues 24–42 (ETRDEYRAVRSSDEVRNSR) constitute a propeptide that is removed on maturation. 3 disulfides stabilise this stretch: Cys44/Cys57, Cys51/Cys62, and Cys56/Cys71.

This sequence belongs to the conotoxin O1 superfamily. Expressed by the venom duct.

The protein localises to the secreted. In Conus ventricosus (Mediterranean cone), this protein is Conotoxin VnMKLT2-011.